A 578-amino-acid chain; its full sequence is A-type ATP synthase subunit A (578 aa).

228–235 (GPFGSGKT) serves as a coordination point for ATP.

It belongs to the ATPase alpha/beta chains family. Has multiple subunits with at least A(3), B(3), C, D, E, F, G, I and proteolipid K(x).

The protein resides in the cell membrane. The enzyme catalyses ATP + H2O + 4 H(+)(in) = ADP + phosphate + 5 H(+)(out). With respect to regulation, ATP hydrolysis stimulated by sulfite, ethanol, glycerol, magnesium and zinc ions, inhibited by diethylstilbestrol (DES) and less well by N,N-dicyclohexylcarbodiimide (DCCD). Its function is as follows. Component of the A-type ATP synthase that produces ATP from ADP in the presence of a proton gradient across the membrane. The A chain is the catalytic subunit. In Methanosarcina mazei (strain ATCC BAA-159 / DSM 3647 / Goe1 / Go1 / JCM 11833 / OCM 88) (Methanosarcina frisia), this protein is A-type ATP synthase subunit A.